Consider the following 44-residue polypeptide: Phosphatase RapE inhibitor (44 aa).

Propeptides lie at residues Met1–Ala30 and Leu36–Val44.

This sequence belongs to the Phr family. Contains a predicted signal peptide cleavage site in the N-terminal region, however the propeptide is probably only subject to processing events at the ends of the mature peptide.

It is found in the secreted. It localises to the cytoplasm. Its function is as follows. Signaling molecule involved in the regulation of sporulation. Secreted during production, but the mature peptide acts intracellularly, indicating that it needs to be imported into the cell to function. Inhibitor of the RapE phosphatase activity. Does not inhibit the phosphatase activity of RapA and RapB. Probably plays a dispensable role in the overall context of sporulation initiation. The chain is Phosphatase RapE inhibitor (phrE) from Bacillus subtilis (strain 168).